The sequence spans 128 residues: Type III secretion protein HrcQb (128 aa).

Positions 1–21 (MSTEDLYQEDVEMLDDYEDPS) are enriched in acidic residues. The segment at 1-57 (MSTEDLYQEDVEMLDDYEDPSTEQHWSEEDGEPSGYATAEPDDHAAQEEQDEPPALD) is disordered. The segment at 50–128 (QDEPPALDSL…LQITRLVTRS (79 aa)) is hrcQb-C. Residues 78 to 81 (RRLD) are dimer-dimer interface.

This sequence belongs to the FliN/MopA/SpaO family. In terms of assembly, homotetramer. The four monomers assemble into two tightly bound homodimers. Interacts with HrcQa.

The protein resides in the cytoplasm. Its function is as follows. Component of the type III secretion system, which is required for effector protein delivery, parasitism, and pathogenicity. Probably participates in the formation of a C-ring-like assembly along with HrcQa. This Pseudomonas savastanoi pv. phaseolicola (Pseudomonas syringae pv. phaseolicola) protein is Type III secretion protein HrcQb (hrcQb).